The sequence spans 277 residues: Caspase-3 (277 aa).

Methionine 1 carries the N-acetylmethionine modification. 2 consecutive propeptides follow at residues 1 to 9 (MENTENSVD) and 10 to 28 (SKSI…KSVD). The residue at position 11 (lysine 11) is an N6-acetyllysine. The residue at position 26 (serine 26) is a Phosphoserine. Active-site residues include histidine 121 and cysteine 163. Residue cysteine 163 is modified to S-nitrosocysteine; in inhibited form.

It belongs to the peptidase C14A family. As to quaternary structure, heterotetramer that consists of two anti-parallel arranged heterodimers, each one formed by a 17 kDa (p17) and a 12 kDa (p12) subunit. Interacts with BIRC6/bruce. In terms of processing, cleavage by granzyme B, caspase-6, caspase-8 and caspase-10 generates the two active subunits. Additional processing of the propeptides is likely due to the autocatalytic activity of the activated protease. Active heterodimers between the small subunit of caspase-7 protease and the large subunit of caspase-3 also occur and vice versa. S-nitrosylated on its catalytic site cysteine in unstimulated cell lines and denitrosylated upon activation of the Fas apoptotic pathway, associated with an increase in intracellular caspase activity. Fas therefore activates caspase-3 not only by inducing the cleavage of the caspase zymogen to its active subunits, but also by stimulating the denitrosylation of its active site thiol. Post-translationally, ubiquitinated by BIRC6; this activity is inhibited by DIABLO/SMAC.

The protein resides in the cytoplasm. It carries out the reaction Strict requirement for an Asp residue at positions P1 and P4. It has a preferred cleavage sequence of Asp-Xaa-Xaa-Asp-|- with a hydrophobic amino-acid residue at P2 and a hydrophilic amino-acid residue at P3, although Val or Ala are also accepted at this position.. With respect to regulation, inhibited by BIRC6; following inhibition of BIRC6-caspase binding by DIABLO/SMAC, BIRC6 is subjected to caspase cleavage, leading to an increase in active caspases. In terms of biological role, involved in the activation cascade of caspases responsible for apoptosis execution. At the onset of apoptosis, it proteolytically cleaves poly(ADP-ribose) polymerase PARP1 at a '216-Asp-|-Gly-217' bond. Cleaves and activates sterol regulatory element binding proteins (SREBPs) between the basic helix-loop-helix leucine zipper domain and the membrane attachment domain. Cleaves and activates caspase-6, -7 and -9 (CASP6, CASP7 and CASP9, respectively). Cleaves and inactivates interleukin-18 (IL18). Triggers cell adhesion in sympathetic neurons through RET cleavage. Cleaves IL-1 beta between an Asp and an Ala, releasing the mature cytokine which is involved in a variety of inflammatory processes. Cleaves and inhibits serine/threonine-protein kinase AKT1 in response to oxidative stress. Acts as an inhibitor of type I interferon production during virus-induced apoptosis by mediating cleavage of antiviral proteins CGAS, IRF3 and MAVS, thereby preventing cytokine overproduction. Also involved in pyroptosis by mediating cleavage and activation of gasdermin-E (GSDME). Cleaves XRCC4 and phospholipid scramblase proteins XKR4, XKR8 and XKR9, leading to promote phosphatidylserine exposure on apoptotic cell surface. Cleaves BIRC6 following inhibition of BIRC6-caspase binding by DIABLO/SMAC. This chain is Caspase-3 (CASP3), found in Macaca fascicularis (Crab-eating macaque).